Here is a 336-residue protein sequence, read N- to C-terminus: Biotin synthase (336 aa).

Positions 36 to 263 constitute a Radical SAM core domain; that stretch reads TKVQISTLLS…ESHVRLAAGR (228 aa). [4Fe-4S] cluster contacts are provided by cysteine 51, cysteine 55, and cysteine 58. Residues cysteine 95, cysteine 126, cysteine 186, and arginine 258 each coordinate [2Fe-2S] cluster.

Belongs to the radical SAM superfamily. Biotin synthase family. As to quaternary structure, homodimer. [4Fe-4S] cluster serves as cofactor. It depends on [2Fe-2S] cluster as a cofactor.

It carries out the reaction (4R,5S)-dethiobiotin + (sulfur carrier)-SH + 2 reduced [2Fe-2S]-[ferredoxin] + 2 S-adenosyl-L-methionine = (sulfur carrier)-H + biotin + 2 5'-deoxyadenosine + 2 L-methionine + 2 oxidized [2Fe-2S]-[ferredoxin]. Its pathway is cofactor biosynthesis; biotin biosynthesis; biotin from 7,8-diaminononanoate: step 2/2. Its function is as follows. Catalyzes the conversion of dethiobiotin (DTB) to biotin by the insertion of a sulfur atom into dethiobiotin via a radical-based mechanism. The polypeptide is Biotin synthase (Gluconobacter oxydans (strain 621H) (Gluconobacter suboxydans)).